We begin with the raw amino-acid sequence, 510 residues long: 2,3-bisphosphoglycerate-independent phosphoglycerate mutase (510 aa).

Residues Asp14 and Ser64 each contribute to the Mn(2+) site. Residue Ser64 is the Phosphoserine intermediate of the active site. Substrate is bound by residues His125, 155 to 156 (RD), Arg187, Arg193, 259 to 262 (RADR), and Lys332. Positions 399, 403, 440, 441, and 459 each coordinate Mn(2+).

Belongs to the BPG-independent phosphoglycerate mutase family. In terms of assembly, monomer. Requires Mn(2+) as cofactor.

The enzyme catalyses (2R)-2-phosphoglycerate = (2R)-3-phosphoglycerate. Its pathway is carbohydrate degradation; glycolysis; pyruvate from D-glyceraldehyde 3-phosphate: step 3/5. In terms of biological role, catalyzes the interconversion of 2-phosphoglycerate and 3-phosphoglycerate. This chain is 2,3-bisphosphoglycerate-independent phosphoglycerate mutase, found in Pseudomonas savastanoi pv. phaseolicola (strain 1448A / Race 6) (Pseudomonas syringae pv. phaseolicola (strain 1448A / Race 6)).